Consider the following 403-residue polypeptide: Creatinase (403 aa).

His232 is a catalytic residue.

It belongs to the peptidase M24 family. Creatinase subfamily. As to quaternary structure, homodimer.

It catalyses the reaction creatine + H2O = sarcosine + urea. The polypeptide is Creatinase (Pseudomonas putida (Arthrobacter siderocapsulatus)).